The following is a 439-amino-acid chain: tRNA modification GTPase MnmE (439 aa).

3 residues coordinate (6S)-5-formyl-5,6,7,8-tetrahydrofolate: Arg-26, Glu-88, and Arg-127. The region spanning Gly-220–Ile-367 is the TrmE-type G domain. Asn-230 serves as a coordination point for K(+). GTP contacts are provided by residues Asn-230–Ser-235, Thr-249–Thr-255, and Asp-274–Gly-277. Ser-234 provides a ligand contact to Mg(2+). The K(+) site is built by Thr-249, Ile-251, and Thr-254. Mg(2+) is bound at residue Thr-255. Residue Lys-439 participates in (6S)-5-formyl-5,6,7,8-tetrahydrofolate binding.

It belongs to the TRAFAC class TrmE-Era-EngA-EngB-Septin-like GTPase superfamily. TrmE GTPase family. Homodimer. Heterotetramer of two MnmE and two MnmG subunits. Requires K(+) as cofactor.

It localises to the cytoplasm. Its function is as follows. Exhibits a very high intrinsic GTPase hydrolysis rate. Involved in the addition of a carboxymethylaminomethyl (cmnm) group at the wobble position (U34) of certain tRNAs, forming tRNA-cmnm(5)s(2)U34. The protein is tRNA modification GTPase MnmE of Deinococcus geothermalis (strain DSM 11300 / CIP 105573 / AG-3a).